The sequence spans 98 residues: MSTFTTDEVARLANLARIDLTPAELERYAGELEVIASAVARVSEVAGDDVPATSHPIPLTNVWRDDVAAPTLDRGEVLASAPEAADGKFAVPQILGEE.

This sequence belongs to the GatC family. Heterotrimer of A, B and C subunits.

It catalyses the reaction L-glutamyl-tRNA(Gln) + L-glutamine + ATP + H2O = L-glutaminyl-tRNA(Gln) + L-glutamate + ADP + phosphate + H(+). The catalysed reaction is L-aspartyl-tRNA(Asn) + L-glutamine + ATP + H2O = L-asparaginyl-tRNA(Asn) + L-glutamate + ADP + phosphate + 2 H(+). In terms of biological role, allows the formation of correctly charged Asn-tRNA(Asn) or Gln-tRNA(Gln) through the transamidation of misacylated Asp-tRNA(Asn) or Glu-tRNA(Gln) in organisms which lack either or both of asparaginyl-tRNA or glutaminyl-tRNA synthetases. The reaction takes place in the presence of glutamine and ATP through an activated phospho-Asp-tRNA(Asn) or phospho-Glu-tRNA(Gln). This chain is Aspartyl/glutamyl-tRNA(Asn/Gln) amidotransferase subunit C, found in Beutenbergia cavernae (strain ATCC BAA-8 / DSM 12333 / CCUG 43141 / JCM 11478 / NBRC 16432 / NCIMB 13614 / HKI 0122).